A 613-amino-acid polypeptide reads, in one-letter code: UvrABC system protein C (613 aa).

In terms of domain architecture, GIY-YIG spans aspartate 29–isoleucine 107. A UVR domain is found at lysine 217–isoleucine 252.

This sequence belongs to the UvrC family. Interacts with UvrB in an incision complex.

It is found in the cytoplasm. The UvrABC repair system catalyzes the recognition and processing of DNA lesions. UvrC both incises the 5' and 3' sides of the lesion. The N-terminal half is responsible for the 3' incision and the C-terminal half is responsible for the 5' incision. This is UvrABC system protein C from Anaplasma marginale (strain St. Maries).